The following is an 80-amino-acid chain: Clavaspirin (80 aa).

The signal sequence occupies residues 1–17; it reads MKTIILILLILGLGIDA. Residues 18–29 constitute a propeptide that is removed on maturation; the sequence is KSLEESKADEEK. L52 carries the leucine amide modification. The propeptide occupies 53-80; it reads GDDQQDNGKFYGYYAEDNGKHWYDTGDQ.

As to expression, pharyngeal tissues and hemocytes.

The protein localises to the secreted. In terms of biological role, exhibits broad-spectrum antimicrobial activity against both Gram-positive and Gram-negative bacteria. Has potent hemolytic activity. The chain is Clavaspirin from Styela clava (Sea squirt).